The primary structure comprises 62 residues: Prokaryotic ubiquitin-like protein Pup (62 aa).

The disordered stretch occupies residues 1–36; the sequence is MEKSSQIHGSKPGDDNADEPENAAGQSQIRKQGADD. An ARC ATPase binding region spans residues 18–56; it reads DEPENAAGQSQIRKQGADDLLDEIDGLLESNAEEFVRSY. The residue at position 62 (Gln62) is a Deamidated glutamine. Residue Gln62 forms an Isoglutamyl lysine isopeptide (Gln-Lys) (interchain with K-? in acceptor proteins) linkage.

The protein belongs to the prokaryotic ubiquitin-like protein family. In terms of assembly, strongly interacts with the proteasome-associated ATPase ARC through a hydrophobic interface; the interacting region of Pup lies in its C-terminal half. There is one Pup binding site per ARC hexamer ring. Is modified by deamidation of its C-terminal glutamine to glutamate by the deamidase Dop, a prerequisite to the subsequent pupylation process.

Its pathway is protein degradation; proteasomal Pup-dependent pathway. Functionally, protein modifier that is covalently attached to lysine residues of substrate proteins, thereby targeting them for proteasomal degradation. The tagging system is termed pupylation. This is Prokaryotic ubiquitin-like protein Pup from Corynebacterium kroppenstedtii (strain DSM 44385 / JCM 11950 / CIP 105744 / CCUG 35717).